The primary structure comprises 292 residues: Ribosomal protein L11 methyltransferase (292 aa).

Positions 145, 166, 188, and 229 each coordinate S-adenosyl-L-methionine.

Belongs to the methyltransferase superfamily. PrmA family.

It is found in the cytoplasm. It catalyses the reaction L-lysyl-[protein] + 3 S-adenosyl-L-methionine = N(6),N(6),N(6)-trimethyl-L-lysyl-[protein] + 3 S-adenosyl-L-homocysteine + 3 H(+). In terms of biological role, methylates ribosomal protein L11. The protein is Ribosomal protein L11 methyltransferase of Alteromonas mediterranea (strain DSM 17117 / CIP 110805 / LMG 28347 / Deep ecotype).